The following is a 692-amino-acid chain: Penicillin-binding protein activator LpoA (692 aa).

A signal peptide spans 1–26 (MLSSITVRTKSGRLIPLVLAATLLAA). Residue Cys-27 is the site of N-palmitoyl cysteine attachment. Residue Cys-27 is the site of S-diacylglycerol cysteine attachment. 2 disordered regions span residues 297 to 316 (AAAA…AAAT) and 324 to 373 (VNAA…PDAH). Positions 332 to 363 (PSAQGTDAAAPAAPNDSAALPPLDAAGDPIAP) are enriched in low complexity.

This sequence belongs to the LpoA family. Interacts with PBP1a.

The protein localises to the cell outer membrane. In terms of biological role, regulator of peptidoglycan synthesis that is essential for the function of penicillin-binding protein 1A (PBP1a). The chain is Penicillin-binding protein activator LpoA from Edwardsiella piscicida.